The following is a 535-amino-acid chain: Keratin, type II cytoskeletal 79 (535 aa).

Composition is skewed to polar residues over residues 1-12 (MRSSVSRQTYST) and 28-38 (QARTSFSSVTV). The interval 1-53 (MRSSVSRQTYSTKGAFSSSSASGGGGSQARTSFSSVTVSRNSGRGGGPRCGPS) is disordered. Residues 1–141 (MRSSVSRQTY…DPEIQRVRTE (141 aa)) form a head region. Residues 43 to 53 (GRGGGPRCGPS) are compositionally biased toward gly residues. Residues 142–177 (EREQIKTLNNKFASFIDKVRFLEQQNKVLETKWALL) form a coil 1A region. Residues 142–457 (EREQIKTLNN…KLLESEESRM (316 aa)) form the IF rod domain. The interval 178 to 198 (QEQGQKSGVTRNNLEPLFEHF) is linker 1. Positions 199-290 (INNLRGKLDN…HLYEEELSQV (92 aa)) are coil 1B. The interval 291–314 (QTHVSDTSVILSMDNNRNLDLDSI) is linker 12. The interval 315-453 (IAEVKAQYEQ…ATYRKLLESE (139 aa)) is coil 2. The tail stretch occupies residues 454–535 (ESRMSGECPS…TTVKTSSRRY (82 aa)).

Belongs to the intermediate filament family. In terms of assembly, heterotetramer of two type I and two type II keratins.

This Bos taurus (Bovine) protein is Keratin, type II cytoskeletal 79 (KRT79).